A 336-amino-acid polypeptide reads, in one-letter code: MYYPFVRKALFQLDPERAHEFTFQQLRRITGTPLEALVRQKVPTKPVTCMGLTFKNPLGLAAGLDKDGECIDALGAMGFGSLEIGTVTPRPQPGNDKPRLFRLVDAEGLINRMGFNNLGVDNLVENVKKAHFDGILGINIGKNKDTPVENGKDDYLICMEKVYAYAGYIAINISSPNTPGLRTLQYGDALDDLLIAIKNKQNDLQAIHHKYVPVAVKIAPDLCEEELIQVADSLLRHNIDGVIATNTTLDRSLVQGMKNCQQTGGLSGRPLQLKSTEIIRRLSQELNGQLPIIGVGGIDSVIAAREKIAAGATLVQIYSGFIFKGPPLIKEIVTHI.

FMN-binding positions include 62–66 and Thr-86; that span reads AGLDK. Position 66 (Lys-66) interacts with substrate. 111–115 contacts substrate; sequence NRMGF. Positions 139 and 172 each coordinate FMN. Asn-172 is a substrate binding site. Ser-175 functions as the Nucleophile in the catalytic mechanism. Substrate is bound at residue Asn-177. Residues Lys-217 and Thr-245 each coordinate FMN. Position 246-247 (246-247) interacts with substrate; the sequence is NT. Residues Gly-268, Gly-297, and 318 to 319 contribute to the FMN site; that span reads YS.

It belongs to the dihydroorotate dehydrogenase family. Type 2 subfamily. In terms of assembly, monomer. It depends on FMN as a cofactor.

It is found in the cell membrane. It catalyses the reaction (S)-dihydroorotate + a quinone = orotate + a quinol. The protein operates within pyrimidine metabolism; UMP biosynthesis via de novo pathway; orotate from (S)-dihydroorotate (quinone route): step 1/1. Functionally, catalyzes the conversion of dihydroorotate to orotate with quinone as electron acceptor. The protein is Dihydroorotate dehydrogenase (quinone) of Salmonella arizonae (strain ATCC BAA-731 / CDC346-86 / RSK2980).